Here is a 203-residue protein sequence, read N- to C-terminus: Glycerol-3-phosphate acyltransferase (203 aa).

The next 5 membrane-spanning stretches (helical) occupy residues 5–25, 55–75, 88–108, 114–134, and 162–182; these read VLGLVLVAAGYLAGSIPFGVV, KLGIAVLLLDAAKAIVPILVA, FTVLVALAAFVGHLYPVWLGF, VATGLGIFLVLSPWAALAGAV, and FVAHGWTSPVSWAGLALAALI.

This sequence belongs to the PlsY family. Probably interacts with PlsX.

It is found in the cell inner membrane. It catalyses the reaction an acyl phosphate + sn-glycerol 3-phosphate = a 1-acyl-sn-glycero-3-phosphate + phosphate. It functions in the pathway lipid metabolism; phospholipid metabolism. In terms of biological role, catalyzes the transfer of an acyl group from acyl-phosphate (acyl-PO(4)) to glycerol-3-phosphate (G3P) to form lysophosphatidic acid (LPA). This enzyme utilizes acyl-phosphate as fatty acyl donor, but not acyl-CoA or acyl-ACP. The protein is Glycerol-3-phosphate acyltransferase of Anaeromyxobacter sp. (strain Fw109-5).